Here is a 178-residue protein sequence, read N- to C-terminus: Large ribosomal subunit protein uL10 (178 aa).

Belongs to the universal ribosomal protein uL10 family. Part of the ribosomal stalk of the 50S ribosomal subunit. The N-terminus interacts with L11 and the large rRNA to form the base of the stalk. The C-terminus forms an elongated spine to which L12 dimers bind in a sequential fashion forming a multimeric L10(L12)X complex.

Its function is as follows. Forms part of the ribosomal stalk, playing a central role in the interaction of the ribosome with GTP-bound translation factors. The polypeptide is Large ribosomal subunit protein uL10 (Stenotrophomonas maltophilia (strain R551-3)).